Here is a 376-residue protein sequence, read N- to C-terminus: Riboflavin biosynthesis protein RibD (376 aa).

The segment at 1 to 150 is deaminase; the sequence is MEDFSEQQLF…QPYLYQRTHN (150 aa). Residues 6–128 enclose the CMP/dCMP-type deaminase domain; it reads EQQLFFMRRA…MLRQAGIQVY (123 aa). Histidine 55 lines the Zn(2+) pocket. Glutamate 57 serves as the catalytic Proton donor. Zn(2+) contacts are provided by cysteine 80 and cysteine 89. The tract at residues 151 to 376 is reductase; sequence FPWTILKSAA…SPQVFEPIRN (226 aa). NADP(+) is bound at residue alanine 159. Substrate is bound at residue serine 173. An NADP(+)-binding site is contributed by tryptophan 175. Arginine 189 is a substrate binding site. Residues threonine 201 and aspartate 205 each contribute to the NADP(+) site. Residues leucine 209 and arginine 212 each contribute to the substrate site. Residue serine 230 participates in NADP(+) binding. Glutamate 300 contributes to the substrate binding site. NADP(+) is bound at residue 302 to 308; that stretch reads GTTLHTS.

The protein in the N-terminal section; belongs to the cytidine and deoxycytidylate deaminase family. This sequence in the C-terminal section; belongs to the HTP reductase family. Zn(2+) serves as cofactor.

The catalysed reaction is 2,5-diamino-6-hydroxy-4-(5-phosphoribosylamino)-pyrimidine + H2O + H(+) = 5-amino-6-(5-phospho-D-ribosylamino)uracil + NH4(+). It carries out the reaction 5-amino-6-(5-phospho-D-ribitylamino)uracil + NADP(+) = 5-amino-6-(5-phospho-D-ribosylamino)uracil + NADPH + H(+). The protein operates within cofactor biosynthesis; riboflavin biosynthesis; 5-amino-6-(D-ribitylamino)uracil from GTP: step 2/4. It participates in cofactor biosynthesis; riboflavin biosynthesis; 5-amino-6-(D-ribitylamino)uracil from GTP: step 3/4. In terms of biological role, converts 2,5-diamino-6-(ribosylamino)-4(3h)-pyrimidinone 5'-phosphate into 5-amino-6-(ribosylamino)-2,4(1h,3h)-pyrimidinedione 5'-phosphate. This Chlamydia pneumoniae (Chlamydophila pneumoniae) protein is Riboflavin biosynthesis protein RibD (ribD).